The sequence spans 205 residues: Large ribosomal subunit protein uL4 (205 aa).

Residues 65 to 99 form a disordered region; sequence RQKGTGGARHGSRKSPTFRHGGVYKGPTPRSHGHD.

This sequence belongs to the universal ribosomal protein uL4 family. In terms of assembly, part of the 50S ribosomal subunit.

In terms of biological role, one of the primary rRNA binding proteins, this protein initially binds near the 5'-end of the 23S rRNA. It is important during the early stages of 50S assembly. It makes multiple contacts with different domains of the 23S rRNA in the assembled 50S subunit and ribosome. Functionally, forms part of the polypeptide exit tunnel. This chain is Large ribosomal subunit protein uL4, found in Ruegeria pomeroyi (strain ATCC 700808 / DSM 15171 / DSS-3) (Silicibacter pomeroyi).